A 389-amino-acid polypeptide reads, in one-letter code: Succinyl-diaminopimelate desuccinylase (389 aa).

His72 lines the Zn(2+) pocket. The active site involves Asp74. Residue Asp105 coordinates Zn(2+). The active-site Proton acceptor is Glu144. 3 residues coordinate Zn(2+): Glu145, Glu173, and His362.

Belongs to the peptidase M20A family. DapE subfamily. As to quaternary structure, homodimer. The cofactor is Zn(2+). It depends on Co(2+) as a cofactor.

It catalyses the reaction N-succinyl-(2S,6S)-2,6-diaminopimelate + H2O = (2S,6S)-2,6-diaminopimelate + succinate. The protein operates within amino-acid biosynthesis; L-lysine biosynthesis via DAP pathway; LL-2,6-diaminopimelate from (S)-tetrahydrodipicolinate (succinylase route): step 3/3. Functionally, catalyzes the hydrolysis of N-succinyl-L,L-diaminopimelic acid (SDAP), forming succinate and LL-2,6-diaminopimelate (DAP), an intermediate involved in the bacterial biosynthesis of lysine and meso-diaminopimelic acid, an essential component of bacterial cell walls. In Rhodopseudomonas palustris (strain HaA2), this protein is Succinyl-diaminopimelate desuccinylase.